The following is a 407-amino-acid chain: Cytochrome P450 NovI (407 aa).

Cys357 serves as a coordination point for heme.

It belongs to the cytochrome P450 family. Requires heme as cofactor.

Its pathway is antibiotic biosynthesis; novobiocin biosynthesis. In terms of biological role, together with NovH, involved in the formation of a beta-OH-Tyr intermediate in the novobiocin biosynthesis pathway, an aminocoumarin family antibiotic that targets bacterial DNA gyrases. Acts as a cytochrome P450-type monooxygenase with specificity for the tyrosyl-S-NovH acyl enzyme (L-Tyr-S-NovH) to form the beta-OH-Tyr intermediate (L-beta-OH-Tyr-S-NovH). The polypeptide is Cytochrome P450 NovI (novI) (Streptomyces niveus (Streptomyces spheroides)).